Reading from the N-terminus, the 234-residue chain is Large ribosomal subunit protein uL1 (234 aa).

It belongs to the universal ribosomal protein uL1 family. In terms of assembly, part of the 50S ribosomal subunit.

In terms of biological role, binds directly to 23S rRNA. The L1 stalk is quite mobile in the ribosome, and is involved in E site tRNA release. Its function is as follows. Protein L1 is also a translational repressor protein, it controls the translation of the L11 operon by binding to its mRNA. The polypeptide is Large ribosomal subunit protein uL1 (Prochlorococcus marinus (strain MIT 9211)).